The sequence spans 124 residues: Small ribosomal subunit protein uS12 (124 aa).

Aspartate 89 is modified (3-methylthioaspartic acid).

The protein belongs to the universal ribosomal protein uS12 family. In terms of assembly, part of the 30S ribosomal subunit. Contacts proteins S8 and S17. May interact with IF1 in the 30S initiation complex.

With S4 and S5 plays an important role in translational accuracy. In terms of biological role, interacts with and stabilizes bases of the 16S rRNA that are involved in tRNA selection in the A site and with the mRNA backbone. Located at the interface of the 30S and 50S subunits, it traverses the body of the 30S subunit contacting proteins on the other side and probably holding the rRNA structure together. The combined cluster of proteins S8, S12 and S17 appears to hold together the shoulder and platform of the 30S subunit. The sequence is that of Small ribosomal subunit protein uS12 from Erwinia tasmaniensis (strain DSM 17950 / CFBP 7177 / CIP 109463 / NCPPB 4357 / Et1/99).